The following is a 325-amino-acid chain: Malate dehydrogenase (325 aa).

11-17 serves as a coordination point for NAD(+); the sequence is GAAGHVS. Arg92 and Arg98 together coordinate substrate. Residues Asn105, Gln112, and 129–131 contribute to the NAD(+) site; that span reads VGN. 2 residues coordinate substrate: Asn131 and Arg162. His187 functions as the Proton acceptor in the catalytic mechanism.

It belongs to the LDH/MDH superfamily. MDH type 2 family.

The catalysed reaction is (S)-malate + NAD(+) = oxaloacetate + NADH + H(+). Functionally, catalyzes the reversible oxidation of malate to oxaloacetate. The polypeptide is Malate dehydrogenase (Desulfotalea psychrophila (strain LSv54 / DSM 12343)).